The sequence spans 218 residues: Transaldolase (218 aa).

Lysine 83 functions as the Schiff-base intermediate with substrate in the catalytic mechanism.

This sequence belongs to the transaldolase family. Type 3B subfamily.

It localises to the cytoplasm. The catalysed reaction is D-sedoheptulose 7-phosphate + D-glyceraldehyde 3-phosphate = D-erythrose 4-phosphate + beta-D-fructose 6-phosphate. It functions in the pathway carbohydrate degradation; pentose phosphate pathway; D-glyceraldehyde 3-phosphate and beta-D-fructose 6-phosphate from D-ribose 5-phosphate and D-xylulose 5-phosphate (non-oxidative stage): step 2/3. Transaldolase is important for the balance of metabolites in the pentose-phosphate pathway. Does not show fructose-6-P aldolase activity. This chain is Transaldolase (tal), found in Thermotoga maritima (strain ATCC 43589 / DSM 3109 / JCM 10099 / NBRC 100826 / MSB8).